The sequence spans 668 residues: Golgin subfamily A member 6-like protein 1 (668 aa).

5 disordered regions span residues 1-120 (MLMW…HQEA), 323-356 (IREQ…RQEE), 384-466 (EKMH…EMWR), 481-591 (KEKM…REQE), and 603-639 (EQEE…MRRQ). The segment covering 15-41 (LPTHPHLPTHPHLPTHPHLPTHPHLPT) has biased composition (basic residues). Residues 51–72 (MSKETRQSKLAEAKEQLTDHHP) are compositionally biased toward basic and acidic residues. Polar residues-rich tracts occupy residues 73-83 (QTNPSVGTAAS) and 91-103 (NNGT…TSGG). Residues 106–120 (SPEDEQKASHQHQEA) show a composition bias toward basic and acidic residues. The stretch at 177 to 663 (LEQALSAVAT…EEKMQEHQEH (487 aa)) forms a coiled coil.

This sequence belongs to the GOLGA6 family.

This is Golgin subfamily A member 6-like protein 1 (GOLGA6L1) from Homo sapiens (Human).